A 270-amino-acid chain; its full sequence is 4-hydroxy-tetrahydrodipicolinate reductase (270 aa).

Residues 8–13, D34, 102–104, and 128–131 contribute to the NAD(+) site; these read GALGRM, GTT, and SQNY. H160 functions as the Proton donor/acceptor in the catalytic mechanism. (S)-2,3,4,5-tetrahydrodipicolinate is bound at residue H161. The active-site Proton donor is K164. Position 170–171 (170–171) interacts with (S)-2,3,4,5-tetrahydrodipicolinate; sequence GT.

It belongs to the DapB family.

It is found in the cytoplasm. It carries out the reaction (S)-2,3,4,5-tetrahydrodipicolinate + NAD(+) + H2O = (2S,4S)-4-hydroxy-2,3,4,5-tetrahydrodipicolinate + NADH + H(+). It catalyses the reaction (S)-2,3,4,5-tetrahydrodipicolinate + NADP(+) + H2O = (2S,4S)-4-hydroxy-2,3,4,5-tetrahydrodipicolinate + NADPH + H(+). Its pathway is amino-acid biosynthesis; L-lysine biosynthesis via DAP pathway; (S)-tetrahydrodipicolinate from L-aspartate: step 4/4. Functionally, catalyzes the conversion of 4-hydroxy-tetrahydrodipicolinate (HTPA) to tetrahydrodipicolinate. This is 4-hydroxy-tetrahydrodipicolinate reductase from Methanococcus maripaludis (strain DSM 14266 / JCM 13030 / NBRC 101832 / S2 / LL).